Consider the following 149-residue polypeptide: D-aminoacyl-tRNA deacylase (149 aa).

Positions 137 to 138 match the Gly-cisPro motif, important for rejection of L-amino acids motif; sequence GP.

The protein belongs to the DTD family. As to quaternary structure, homodimer.

It is found in the cytoplasm. It catalyses the reaction glycyl-tRNA(Ala) + H2O = tRNA(Ala) + glycine + H(+). It carries out the reaction a D-aminoacyl-tRNA + H2O = a tRNA + a D-alpha-amino acid + H(+). Functionally, an aminoacyl-tRNA editing enzyme that deacylates mischarged D-aminoacyl-tRNAs. Also deacylates mischarged glycyl-tRNA(Ala), protecting cells against glycine mischarging by AlaRS. Acts via tRNA-based rather than protein-based catalysis; rejects L-amino acids rather than detecting D-amino acids in the active site. By recycling D-aminoacyl-tRNA to D-amino acids and free tRNA molecules, this enzyme counteracts the toxicity associated with the formation of D-aminoacyl-tRNA entities in vivo and helps enforce protein L-homochirality. This is D-aminoacyl-tRNA deacylase from Thermoanaerobacter sp. (strain X514).